A 141-amino-acid polypeptide reads, in one-letter code: HTH-type transcriptional repressor NsrR (141 aa).

The 128-residue stretch at 2–129 folds into the HTH rrf2-type domain; the sequence is QLTSFTDYGL…DNYTLADLVE (128 aa). Positions 28 to 51 form a DNA-binding region, H-T-H motif; the sequence is ISEVTDVYGVSRNHMVKIINQLSR. Positions 91, 96, and 102 each coordinate [2Fe-2S] cluster.

[2Fe-2S] cluster is required as a cofactor.

Nitric oxide-sensitive repressor of genes involved in protecting the cell against nitrosative stress. May require iron for activity. This is HTH-type transcriptional repressor NsrR from Escherichia fergusonii (strain ATCC 35469 / DSM 13698 / CCUG 18766 / IAM 14443 / JCM 21226 / LMG 7866 / NBRC 102419 / NCTC 12128 / CDC 0568-73).